A 60-amino-acid polypeptide reads, in one-letter code: Large ribosomal subunit protein uL30 (60 aa).

The protein belongs to the universal ribosomal protein uL30 family. As to quaternary structure, part of the 50S ribosomal subunit.

In Histophilus somni (strain 2336) (Haemophilus somnus), this protein is Large ribosomal subunit protein uL30.